A 119-amino-acid polypeptide reads, in one-letter code: Large ribosomal subunit protein uL24 (119 aa).

Belongs to the universal ribosomal protein uL24 family. As to quaternary structure, part of the 50S ribosomal subunit.

In terms of biological role, one of two assembly initiator proteins, it binds directly to the 5'-end of the 23S rRNA, where it nucleates assembly of the 50S subunit. Functionally, one of the proteins that surrounds the polypeptide exit tunnel on the outside of the subunit. In Leptospira interrogans serogroup Icterohaemorrhagiae serovar copenhageni (strain Fiocruz L1-130), this protein is Large ribosomal subunit protein uL24.